A 300-amino-acid chain; its full sequence is Protoheme IX farnesyltransferase (300 aa).

The next 9 helical transmembrane spans lie at 24–44 (GLAISVVFSSLAGYLLGIHEF), 46–66 (LETIYVLLMLAIGGYCMVGAS), 99–119 (AFTIATILTITGLTILYMINP), 122–142 (AMFGAISIFLYTCVYTPLKTV), 145–165 (LSVFVGAFPGAIPFMLGWVAA), 176–196 (LFLIQFFWQFPHFWAIGWFLF), 220–240 (IVLYTLWLTAASILPSFGYTG), 244–264 (LTPVSAIIVVLLGLWMLVYAI), and 275–295 (AKTLMLVSVAYISLIQVVYIL).

The protein belongs to the UbiA prenyltransferase family. Protoheme IX farnesyltransferase subfamily.

The protein resides in the cell inner membrane. The catalysed reaction is heme b + (2E,6E)-farnesyl diphosphate + H2O = Fe(II)-heme o + diphosphate. The protein operates within porphyrin-containing compound metabolism; heme O biosynthesis; heme O from protoheme: step 1/1. Functionally, converts heme B (protoheme IX) to heme O by substitution of the vinyl group on carbon 2 of heme B porphyrin ring with a hydroxyethyl farnesyl side group. The chain is Protoheme IX farnesyltransferase from Flavobacterium psychrophilum (strain ATCC 49511 / DSM 21280 / CIP 103535 / JIP02/86).